Reading from the N-terminus, the 247-residue chain is ATP synthase subunit a, chloroplastic (247 aa).

Transmembrane regions (helical) follow at residues 38-58 (QVLI…ALAV), 95-115 (VPFI…GALL), 134-154 (INTT…AGLT), 199-219 (LVVV…VMFL), and 220-240 (GLFT…AYIG).

Belongs to the ATPase A chain family. F-type ATPases have 2 components, CF(1) - the catalytic core - and CF(0) - the membrane proton channel. CF(1) has five subunits: alpha(3), beta(3), gamma(1), delta(1), epsilon(1). CF(0) has four main subunits: a, b, b' and c.

Its subcellular location is the plastid. The protein resides in the chloroplast thylakoid membrane. In terms of biological role, key component of the proton channel; it plays a direct role in the translocation of protons across the membrane. The polypeptide is ATP synthase subunit a, chloroplastic (Helianthus annuus (Common sunflower)).